The chain runs to 330 residues: LIM domain-containing protein pin-2 (330 aa).

5 consecutive LIM zinc-binding domains span residues 21–73, 82–132, 144–194, 202–255, and 264–315; these read CERC…CEHD, CAKC…CFLC, CNKC…CPRC, CFDC…CRDD, and CFIC…CKKC.

In terms of tissue distribution, expressed in neurons and intestine.

It is found in the cytoplasm. Its subcellular location is the nucleus. The polypeptide is LIM domain-containing protein pin-2 (pin-2) (Caenorhabditis elegans).